The following is a 218-amino-acid chain: ER lumen protein-retaining receptor (218 aa).

The Lumenal portion of the chain corresponds to 1–2 (MN). A helical membrane pass occupies residues 3–23 (LFSFLGDMLHLGSMLILLFKI). Topologically, residues 24–57 (KNDKSCAGVSLKSQILFTIVFTARYLDLFTNYVS) are cytoplasmic. Residues 58–78 (LYITFMKITYIAVSYYTLHLI) form a helical membrane-spanning segment. Topologically, residues 79–94 (ARKYKFTYDKDHDTFK) are lumenal. A helical membrane pass occupies residues 95-115 (IVYLIASCAILSLITYDKTTI). Residues 116–123 (GIYSTFLE) are Cytoplasmic-facing. A helical transmembrane segment spans residues 124 to 144 (ILWTFSIYLESIAILPQLILL). Residues 145–152 (QRTGEVEA) are Lumenal-facing. A helical transmembrane segment spans residues 153 to 173 (LTSNYIVLLGGYRAFYLFNWI). The Cytoplasmic portion of the chain corresponds to 174–184 (YRITFYNWSGK). A helical transmembrane segment spans residues 185 to 205 (IEMLSGLLQTILYADFFYYYA). Over 206–218 (KSRMYGKKLVLPQ) the chain is Lumenal.

The protein belongs to the ERD2 family.

The protein localises to the endoplasmic reticulum membrane. Required for the retention of luminal endoplasmic reticulum proteins. Determines the specificity of the luminal ER protein retention system. Also required for normal vesicular traffic through the Golgi. The polypeptide is ER lumen protein-retaining receptor (kdelr) (Dictyostelium discoideum (Social amoeba)).